Reading from the N-terminus, the 559-residue chain is Glucose-6-phosphate isomerase (559 aa).

The active-site Proton donor is glutamate 363. Active-site residues include histidine 394 and lysine 523.

It belongs to the GPI family.

The protein resides in the cytoplasm. It catalyses the reaction alpha-D-glucose 6-phosphate = beta-D-fructose 6-phosphate. The protein operates within carbohydrate biosynthesis; gluconeogenesis. Its pathway is carbohydrate degradation; glycolysis; D-glyceraldehyde 3-phosphate and glycerone phosphate from D-glucose: step 2/4. Catalyzes the reversible isomerization of glucose-6-phosphate to fructose-6-phosphate. This chain is Glucose-6-phosphate isomerase, found in Bartonella henselae (strain ATCC 49882 / DSM 28221 / CCUG 30454 / Houston 1) (Rochalimaea henselae).